A 76-amino-acid polypeptide reads, in one-letter code: Large ribosomal subunit protein uL24 (76 aa).

The protein belongs to the universal ribosomal protein uL24 family. As to quaternary structure, part of the 50S ribosomal subunit.

Its function is as follows. One of two assembly initiator proteins, it binds directly to the 5'-end of the 23S rRNA, where it nucleates assembly of the 50S subunit. One of the proteins that surrounds the polypeptide exit tunnel on the outside of the subunit. The chain is Large ribosomal subunit protein uL24 from Sulfurimonas denitrificans (strain ATCC 33889 / DSM 1251) (Thiomicrospira denitrificans (strain ATCC 33889 / DSM 1251)).